Here is a 341-residue protein sequence, read N- to C-terminus: Anthranilate phosphoribosyltransferase (341 aa).

5-phospho-alpha-D-ribose 1-diphosphate is bound by residues Gly80, 83-84 (GD), Thr88, 90-93 (NIST), 108-116 (KHGNRAVSS), and Ser120. Anthranilate is bound at residue Gly80. Ser92 is a Mg(2+) binding site. An anthranilate-binding site is contributed by Asn111. Arg166 lines the anthranilate pocket. Mg(2+) is bound by residues Asp225 and Glu226.

Belongs to the anthranilate phosphoribosyltransferase family. Homodimer. Mg(2+) is required as a cofactor.

It catalyses the reaction N-(5-phospho-beta-D-ribosyl)anthranilate + diphosphate = 5-phospho-alpha-D-ribose 1-diphosphate + anthranilate. It participates in amino-acid biosynthesis; L-tryptophan biosynthesis; L-tryptophan from chorismate: step 2/5. Functionally, catalyzes the transfer of the phosphoribosyl group of 5-phosphorylribose-1-pyrophosphate (PRPP) to anthranilate to yield N-(5'-phosphoribosyl)-anthranilate (PRA). This Priestia megaterium (strain ATCC 12872 / QMB1551) (Bacillus megaterium) protein is Anthranilate phosphoribosyltransferase.